The following is a 367-amino-acid chain: Cystinosin (367 aa).

An N-terminal signal peptide occupies residues 1 to 22 (MIRRWLVIFILFPLQLIEKCES). Over 23 to 125 (TVDFSVPPIV…LVIHSNIVSI (103 aa)) the chain is Lumenal. N-linked (GlcNAc...) asparagine glycosylation is found at N51, N66, N84, N104, and N107. Residues 123 to 189 (VSIINQVIGW…LFWVPSIKEQ (67 aa)) form the PQ-loop 1 domain. A helical transmembrane segment spans residues 126-150 (INQVIGWIYFVAWSVSFYPQVITNW). At 151–159 (RRKSVVGLS) the chain is on the cytoplasmic side. The helical transmembrane segment at 160 to 179 (FDFVVLNLMGFVAYSVFNIG) threads the bilayer. N166 serves as a coordination point for L-cystine. Residues 180–202 (LFWVPSIKEQFLLKYPNGVNPVD) lie on the Lumenal side of the membrane. Residues 203–225 (SNDVFFSLHAVALTLVVIVQCLL) form a helical membrane-spanning segment. D205 is a H(+) binding site. Topologically, residues 226–234 (YERGSQRVS) are cytoplasmic. A helical membrane pass occupies residues 235-257 (WLAISFLVLSWLFTLIALIMAAV). Residues 258–263 (GATTWL) are Lumenal-facing. Positions 263 to 328 (LQFLFCFSYI…QSYNNDQWTL (66 aa)) constitute a PQ-loop 2 domain. A helical membrane pass occupies residues 264–289 (QFLFCFSYIKLAVTLVKYFPQAYMNF). Positions 273, 280, and 281 each coordinate L-cystine. Over 290 to 298 (HYKSTEGWS) the chain is Cytoplasmic. A helical transmembrane segment spans residues 299 to 308 (IGNVLLDFTG). N301 and D305 together coordinate L-cystine. D305 serves as a coordination point for H(+). At 309–331 (GSFSLLQMFLQSYNNDQWTLIFG) the chain is on the lumenal side. Residues 332–354 (DPTKFGLGIFSIIFDVVFFIQHF) form a helical membrane-spanning segment. D346 is a binding site for H(+). Residues 355–367 (CLYRKKPGYDQLN) are Cytoplasmic-facing. The short motif at 362-366 (GYDQL) is the Lysosomal targeting motif element.

Belongs to the cystinosin family. In terms of assembly, interacts with components of the V-ATPase complex. Interacts with components of the Ragulator complex. Interacts with RRAGA/RagA and RRAGC/RagC. Interacts with AP-3 complex subunit mu (AP3M1 or AP3M2).

The protein resides in the lysosome membrane. It localises to the melanosome membrane. The enzyme catalyses L-cystine(out) + H(+)(out) = L-cystine(in) + H(+)(in). Switches between a lumen- and a cytosol-open conformation: pH induces conformational changes and shifts the equilibrium to facilitate the transition between the lumen- and cytosol-open conformation, thereby promoting cystine transport. Protonation of specific aspartate residues (Asp-205, Asp-305 and Asp-346) favors the cytosol-open conformation. Functionally, cystine/H(+) symporter that mediates export of cystine, the oxidized dimer of cysteine, from lysosomes. Plays an important role in melanin synthesis by catalyzing cystine export from melanosomes, possibly by inhibiting pheomelanin synthesis. In addition to cystine export, also acts as a positive regulator of mTORC1 signaling in kidney proximal tubular cells, via interactions with components of the v-ATPase and Ragulator complexes. Also involved in small GTPase-regulated vesicle trafficking and lysosomal localization of LAMP2A, independently of cystine transporter activity. The protein is Cystinosin of Bos taurus (Bovine).